The primary structure comprises 563 residues: Urocanate hydratase (563 aa).

Residues 53–54 (GG), glutamine 131, 177–179 (GMG), glutamate 197, arginine 202, 243–244 (NA), 264–268 (QTSAH), 274–275 (YL), and tyrosine 323 each bind NAD(+). Cysteine 411 is a catalytic residue. Residue glycine 493 coordinates NAD(+).

The protein belongs to the urocanase family. NAD(+) is required as a cofactor.

The protein resides in the cytoplasm. The catalysed reaction is 4-imidazolone-5-propanoate = trans-urocanate + H2O. Its pathway is amino-acid degradation; L-histidine degradation into L-glutamate; N-formimidoyl-L-glutamate from L-histidine: step 2/3. In terms of biological role, catalyzes the conversion of urocanate to 4-imidazolone-5-propionate. This chain is Urocanate hydratase, found in Yersinia pestis bv. Antiqua (strain Antiqua).